Consider the following 235-residue polypeptide: Kinetochore protein Spc25 (235 aa).

The stretch at 44–106 (KNILSAKEAI…DMEAQLLRHT (63 aa)) forms a coiled coil. Residues 193–216 (EVAGASPVTPSGSERPKATSKHSN) form a disordered region.

The protein belongs to the SPC25 family. In terms of assembly, component of the Ndc80 complex, which is composed of Ndc80, Nuf2 and Spc25.

It is found in the nucleus. Its subcellular location is the chromosome. The protein resides in the centromere. It localises to the kinetochore. Its function is as follows. Acts as a component of the essential kinetochore-associated Ndc80 complex, which is required for chromosome segregation and spindle checkpoint activity during meiosis and mitosis. Required for kinetochore integrity and the organization of stable microtubule binding sites in the outer plate of the kinetochore. Participates in SAC signaling that responds specifically to disruptions in spindle microtubule dynamics. The NDC80 complex synergistically enhances the affinity of the SKA1 complex for microtubules and may allow the NDC80 complex to track depolymerizing microtubules. This chain is Kinetochore protein Spc25, found in Drosophila pseudoobscura pseudoobscura (Fruit fly).